Reading from the N-terminus, the 115-residue chain is Small ribosomal subunit protein bS18c (115 aa).

Positions 91-115 are disordered; that stretch reads TNALKARTQNKDQKKEKFQINKKKK. Residues 99–109 are compositionally biased toward basic and acidic residues; sequence QNKDQKKEKFQ.

The protein belongs to the bacterial ribosomal protein bS18 family. As to quaternary structure, part of the 30S ribosomal subunit.

The protein resides in the plastid. Its subcellular location is the chloroplast. This Ipomoea purpurea (Common morning glory) protein is Small ribosomal subunit protein bS18c.